Consider the following 71-residue polypeptide: Beta-defensin 25 (71 aa).

The first 22 residues, 1 to 22 (MAKWILLIVALLVLSHVPPGST), serve as a signal peptide directing secretion. Cystine bridges form between Cys-27–Cys-54, Cys-34–Cys-48, and Cys-38–Cys-55.

This sequence belongs to the beta-defensin family.

The protein localises to the secreted. Has antibacterial activity. This chain is Beta-defensin 25 (Defb25), found in Mus musculus (Mouse).